A 343-amino-acid polypeptide reads, in one-letter code: MIRLYPEQLRAQLNEGLRAAYLLLGNDPLLLQESQDAVRQVAAAQGFEEHHTFSIDPNTDWNAIFSLCQAMSLFASRQTLLLLLPENGPNAAINEQLLTLTGLLHDDLLLIVRGNKLSKAQENAAWFTALANRSVQVTCQTPEQAQLPRWVAARAKQLNLELDDAANQVLCYCYEGNLLALAQALERLSLLWPDGKLTLPRVEQAVNDAAHFTPFHWVDALLMGKSKRALHILQQLRLEGSEPVILLRTLQRELLLLVNLKRQSAHTPLRALFDKHRVWQNRRGMMGEALNRLSQTQLRQAVQLLTRTELTLKQDYGQSVWAELEGLSLLLCHKPLADVFIDG.

Domain stretches follow at residues Met-1 to Gln-140, Thr-141 to Ala-210, and His-211 to Gly-343.

This sequence belongs to the DNA polymerase HolA subunit family. In terms of assembly, the DNA polymerase III holoenzyme complex contains at least 10 different subunits organized into 3 functionally essential subassemblies: the Pol III core, the beta sliding clamp processivity factor and the clamp-loading complex. The Pol III core (subunits alpha, epsilon and theta) contains the polymerase and the 3'-5' exonuclease proofreading activities. The polymerase is tethered to the template via the dimeric beta sliding clamp processivity factor. The clamp-loading complex (also called gamma complex) assembles the beta sliding clamp onto the primed template and plays a central role in the organization and communication at the replication fork. The clamp-loading complex contains delta, delta', psi and chi, and 3 copies of either or both of two different DnaX proteins, gamma and tau. The DNA replisome complex has a single clamp loader (3 tau and 1 each of delta, delta', psi and chi subunits) which binds 3 Pol III cores (1 core on the leading strand and 2 on the lagging strand) each with a beta sliding clamp dimer. Additional proteins in the replisome are other copies of gamma, psi and chi, Ssb, DNA helicase and RNA primase. The clamp loader hydrolyzes ATP to assemble the beta processivity factor onto the primed template and plays a central role in the organization and communication at the replication fork; the minimal complex to load the beta sliding clamp on DNA is delta, delta', gamma.

The enzyme catalyses DNA(n) + a 2'-deoxyribonucleoside 5'-triphosphate = DNA(n+1) + diphosphate. Functionally, part of the beta sliding clamp loading complex, which hydrolyzes ATP to load the beta clamp onto primed DNA to form the DNA replication pre-initiation complex. DNA polymerase III is a complex, multichain enzyme responsible for most of the replicative synthesis in bacteria. This DNA polymerase also exhibits 3'-5' exonuclease activity. The delta subunit is the wrench that will open the beta subunit dimer, which has been modeled to leave a gap large enough for ssDNA to pass through. The gamma complex (gamma(3),delta,delta') is thought to load beta dimers onto DNA by binding ATP which alters the complex's conformation so it can bind beta sliding clamp dimers and open them at one interface. Primed DNA is recognized, ATP is hydrolyzed releasing the gamma complex and closing the beta sliding clamp ring around the primed DNA. The protein is DNA polymerase III subunit delta (holA) of Escherichia coli (strain K12).